Reading from the N-terminus, the 143-residue chain is MKSSIIRFSVSLPQNLLETLDERLTHKGYSSRSEIVRDMIREKLNEEIWSSGAENTQGVAVLTIIYDHHQRELNQRMIDIQHTSTHKGNVEILCNTHVHLDQHNCLETIILRGNGVHIEDLSIEIGGLKGVKFSKLTRASRFE.

Residues H82, H97, H99, and C105 each coordinate Ni(2+).

It belongs to the transcriptional regulatory CopG/NikR family. Requires Ni(2+) as cofactor.

Transcriptional regulator. This is Putative nickel-responsive regulator from Helicobacter hepaticus (strain ATCC 51449 / 3B1).